The following is a 317-amino-acid chain: Apolipoprotein E (317 aa).

An N-terminal signal peptide occupies residues Met1–Ala18. Residues Thr26 and Thr36 are each glycosylated (O-linked (GalNAc...) threonine). 8 tandem repeats follow at residues Ala80–Thr101, Pro102–Gly123, Ala124–Gly145, Gln146–Leu167, Arg168–Glu189, Arg190–Ala211, Thr212–Arg233, and Ala234–Ala255. Positions Ala80–Ala255 are 8 X 22 AA approximate tandem repeats. Lys93 carries an N-linked (Glc) (glycation) lysine glycan. Methionine sulfoxide is present on Met143. Ser147 bears the Phosphoserine; by FAM20C mark. An LDL and other lipoprotein receptors binding region spans residues His158 to Arg168. Leu162–Arg165 is a heparin binding site. Positions Ala210–Met290 are lipid-binding and lipoprotein association. O-linked (GalNAc...) threonine glycosylation is present at Thr212. Residue Gly229–Met236 participates in heparin binding. Positions Gln266–His317 are homooligomerization. The specificity for association with VLDL stretch occupies residues Arg278–Met290. A glycan (O-linked (GalNAc...) threonine) is linked at Thr307. 2 O-linked (GalNAc...) serine glycosylation sites follow: Ser308 and Ser314.

This sequence belongs to the apolipoprotein A1/A4/E family. As to quaternary structure, homotetramer. May interact with ABCA1; functionally associated with ABCA1 in the biogenesis of HDLs. May interact with APP/A4 amyloid-beta peptide; the interaction is extremely stable in vitro but its physiological significance is unclear. May interact with MAPT. May interact with MAP2. In the cerebrospinal fluid, interacts with secreted SORL1. Interacts with PMEL; this allows the loading of PMEL luminal fragment on ILVs to induce fibril nucleation. In terms of assembly, (Microbial infection) Interacts with hepatitis C virus (HCV) envelope glycoprotein E2; this interaction is required for HCV infectivity and production. In terms of processing, APOE exists as multiple glycosylated and sialylated glycoforms within cells and in plasma. The extent of glycosylation and sialylation are tissue and context specific. Plasma APOE undergoes desialylation and is less glycosylated and sialylated than the cellular form. Glycosylation is not required for proper expression and secretion. O-glycosylated with core 1 or possibly core 8 glycans. Thr-307 and Ser-314 are minor glycosylation sites compared to Ser-308. Glycated in plasma VLDL of normal subjects, and of hyperglycemic diabetic patients at a higher level (2-3 fold). Post-translationally, phosphorylated by FAM20C in the extracellular medium. In terms of processing, undergoes C-terminal proteolytic processing in neurons. C-terminally truncated APOE has a tendency to form neurotoxic intracellular neurofibrillary tangle-like inclusions in neurons. As to expression, produced by several tissues and cell types and mainly found associated with lipid particles in the plasma, the interstitial fluid and lymph. Mainly synthesized by liver hepatocytes. Significant quantities are also produced in brain, mainly by astrocytes and glial cells in the cerebral cortex, but also by neurons in frontal cortex and hippocampus. It is also expressed by cells of the peripheral nervous system. Also expressed by adrenal gland, testis, ovary, skin, kidney, spleen and adipose tissue and macrophages in various tissues.

The protein localises to the secreted. It is found in the extracellular space. It localises to the extracellular matrix. Its subcellular location is the extracellular vesicle. The protein resides in the endosome. The protein localises to the multivesicular body. APOE is an apolipoprotein, a protein associating with lipid particles, that mainly functions in lipoprotein-mediated lipid transport between organs via the plasma and interstitial fluids. APOE is a core component of plasma lipoproteins and is involved in their production, conversion and clearance. Apolipoproteins are amphipathic molecules that interact both with lipids of the lipoprotein particle core and the aqueous environment of the plasma. As such, APOE associates with chylomicrons, chylomicron remnants, very low density lipoproteins (VLDL) and intermediate density lipoproteins (IDL) but shows a preferential binding to high-density lipoproteins (HDL). It also binds a wide range of cellular receptors including the LDL receptor/LDLR, the LDL receptor-related proteins LRP1, LRP2 and LRP8 and the very low-density lipoprotein receptor/VLDLR that mediate the cellular uptake of the APOE-containing lipoprotein particles. Finally, APOE also has a heparin-binding activity and binds heparan-sulfate proteoglycans on the surface of cells, a property that supports the capture and the receptor-mediated uptake of APOE-containing lipoproteins by cells. A main function of APOE is to mediate lipoprotein clearance through the uptake of chylomicrons, VLDLs, and HDLs by hepatocytes. APOE is also involved in the biosynthesis by the liver of VLDLs as well as their uptake by peripheral tissues ensuring the delivery of triglycerides and energy storage in muscle, heart and adipose tissues. By participating in the lipoprotein-mediated distribution of lipids among tissues, APOE plays a critical role in plasma and tissues lipid homeostasis. APOE is also involved in two steps of reverse cholesterol transport, the HDLs-mediated transport of cholesterol from peripheral tissues to the liver, and thereby plays an important role in cholesterol homeostasis. First, it is functionally associated with ABCA1 in the biogenesis of HDLs in tissues. Second, it is enriched in circulating HDLs and mediates their uptake by hepatocytes. APOE also plays an important role in lipid transport in the central nervous system, regulating neuron survival and sprouting. APOE is also involved in innate and adaptive immune responses, controlling for instance the survival of myeloid-derived suppressor cells. Binds to the immune cell receptor LILRB4. APOE may also play a role in transcription regulation through a receptor-dependent and cholesterol-independent mechanism, that activates MAP3K12 and a non-canonical MAPK signal transduction pathway that results in enhanced AP-1-mediated transcription of APP. Functionally, (Microbial infection) Through its interaction with HCV envelope glycoprotein E2, participates in the attachment of HCV to HSPGs and other receptors (LDLr, VLDLr, and SR-B1) on the cell surface and to the assembly, maturation and infectivity of HCV viral particles. This interaction is probably promoted via the up-regulation of cellular autophagy by the virus. The polypeptide is Apolipoprotein E (Homo sapiens (Human)).